The chain runs to 404 residues: Putative nitronate monooxygenase (404 aa).

An FMN-binding site is contributed by 41-43 (PMA). His-224 functions as the Proton acceptor in the catalytic mechanism. His-224 is a binding site for substrate. Residues 270 to 272 (AGG) and 293 to 294 (GT) each bind FMN.

It belongs to the nitronate monooxygenase family. NMO class I subfamily. Requires FMN as cofactor.

The protein resides in the cytoplasm. The enzyme catalyses ethylnitronate + O2 = chemical entity + acetaldehyde + nitrite + H(+). Functionally, catalyzes the oxidation of alkyl nitronates to produce the corresponding carbonyl compounds and nitrites. This chain is Putative nitronate monooxygenase, found in Saccharomyces cerevisiae (strain ATCC 204508 / S288c) (Baker's yeast).